The chain runs to 478 residues: Protein nucleotidyltransferase YdiU (478 aa).

The ATP site is built by Gly-84, Gly-86, Arg-87, Lys-107, Asp-119, Gly-120, Arg-170, and Arg-177. Asp-246 serves as the catalytic Proton acceptor. Mg(2+)-binding residues include Asn-247 and Asp-256. Asp-256 is a binding site for ATP.

Belongs to the SELO family. The cofactor is Mg(2+). Mn(2+) is required as a cofactor.

It carries out the reaction L-seryl-[protein] + ATP = 3-O-(5'-adenylyl)-L-seryl-[protein] + diphosphate. It catalyses the reaction L-threonyl-[protein] + ATP = 3-O-(5'-adenylyl)-L-threonyl-[protein] + diphosphate. The catalysed reaction is L-tyrosyl-[protein] + ATP = O-(5'-adenylyl)-L-tyrosyl-[protein] + diphosphate. The enzyme catalyses L-histidyl-[protein] + UTP = N(tele)-(5'-uridylyl)-L-histidyl-[protein] + diphosphate. It carries out the reaction L-seryl-[protein] + UTP = O-(5'-uridylyl)-L-seryl-[protein] + diphosphate. It catalyses the reaction L-tyrosyl-[protein] + UTP = O-(5'-uridylyl)-L-tyrosyl-[protein] + diphosphate. In terms of biological role, nucleotidyltransferase involved in the post-translational modification of proteins. It can catalyze the addition of adenosine monophosphate (AMP) or uridine monophosphate (UMP) to a protein, resulting in modifications known as AMPylation and UMPylation. The polypeptide is Protein nucleotidyltransferase YdiU (Escherichia coli O127:H6 (strain E2348/69 / EPEC)).